Here is a 591-residue protein sequence, read N- to C-terminus: Potassium-transporting ATPase potassium-binding subunit (591 aa).

A run of 10 helical transmembrane segments spans residues 6–26 (WFQILLFLGLILAVTKPLGVF), 63–83 (WTEYAIAMLLFSAVSMLMLYI), 137–157 (GLAYHNFMSAAVGIAIAIAFI), 179–199 (VLWVLLPFCIMGALALVSQGV), 272–292 (LSNLIEMFSIFAISAGLTYTL), 303–323 (WAVWGAMAALFLVGVSVVYWA), 405–425 (AGMYGMLIYIVLAVFIAGLMV), 444–464 (AMLVALIFPLIILVFSAISSV), 510–530 (VAIGIAMLGGRFLMIIPMLAI), and 553–573 (LFSVLLIGTIIIIGALTFFPA).

Belongs to the KdpA family. The system is composed of three essential subunits: KdpA, KdpB and KdpC.

Its subcellular location is the cell inner membrane. In terms of biological role, part of the high-affinity ATP-driven potassium transport (or Kdp) system, which catalyzes the hydrolysis of ATP coupled with the electrogenic transport of potassium into the cytoplasm. This subunit binds the periplasmic potassium ions and delivers the ions to the membrane domain of KdpB through an intramembrane tunnel. The sequence is that of Potassium-transporting ATPase potassium-binding subunit from Koribacter versatilis (strain Ellin345).